Here is a 297-residue protein sequence, read N- to C-terminus: Probable endonuclease 4 (297 aa).

Zn(2+) is bound by residues His-69, His-110, Glu-145, Asp-179, His-182, His-214, Asp-227, His-229, and Glu-259.

This sequence belongs to the AP endonuclease 2 family. Zn(2+) is required as a cofactor.

It carries out the reaction Endonucleolytic cleavage to 5'-phosphooligonucleotide end-products.. Its function is as follows. Endonuclease IV plays a role in DNA repair. It cleaves phosphodiester bonds at apurinic or apyrimidinic (AP) sites, generating a 3'-hydroxyl group and a 5'-terminal sugar phosphate. The chain is Probable endonuclease 4 from Listeria monocytogenes serovar 1/2a (strain ATCC BAA-679 / EGD-e).